Consider the following 736-residue polypeptide: Gephyrin (736 aa).

The MPT Mo-transferase stretch occupies residues 14-166 (QIRVGVLTVS…FILPALPHAI (153 aa)). Positions 140–316 (LIINLPGSKK…VDITKVARRH (177 aa)) are interaction with GABARAP. Disordered regions lie at residues 181–232 (DELE…DSSS) and 260–290 (TASLSTTPSESPRAQATSRLSTASCPTPKVQ). A compositionally biased stretch (pro residues) spans 187 to 199 (PSPPPPLSPPPTT). Phosphoserine is present on residues serine 188 and serine 194. Residue threonine 198 is modified to Phosphothreonine. The residue at position 200 (serine 200) is a Phosphoserine. Cysteine 212 is lipidated: S-palmitoyl cysteine. Residues 261 to 290 (ASLSTTPSESPRAQATSRLSTASCPTPKVQ) are compositionally biased toward polar residues. At serine 262 the chain carries Phosphoserine. Phosphothreonine is present on residues threonine 265 and threonine 266. 2 positions are modified to phosphoserine: serine 268 and serine 270. Cysteine 284 is lipidated: S-palmitoyl cysteine. A Phosphoserine modification is found at serine 305. An MPT adenylyltransferase region spans residues 326–736 (MDKAFITVLE…VVDVMVIGRL (411 aa)).

The protein in the N-terminal section; belongs to the MoaB/Mog family. In the C-terminal section; belongs to the MoeA family. As to quaternary structure, homotrimer, homodimer and homooligomer. Interacts with GABARAP. Interacts with SRGAP2 (via SH3 domain). Interacts with GABRA3. Interacts with GLRB. GABRA3 and GLRB occupy overlapping binding sites. Interacts with ARHGAP32; IQSEC3, INSYN1 and INSYN2A. Mg(2+) serves as cofactor. Palmitoylated. Palmitoylation is stimulated by GABA type A receptors activity. Palmitoylation by ZDHHC12 regulates clustering at synapses.

The protein localises to the postsynaptic cell membrane. It localises to the cell membrane. Its subcellular location is the cytoplasm. The protein resides in the cytosol. It is found in the cytoskeleton. The protein localises to the cell projection. It localises to the dendrite. Its subcellular location is the postsynaptic density. The enzyme catalyses molybdopterin + ATP + H(+) = adenylyl-molybdopterin + diphosphate. The catalysed reaction is adenylyl-molybdopterin + molybdate = Mo-molybdopterin + AMP + H(+). Its pathway is cofactor biosynthesis; molybdopterin biosynthesis. Inhibited by copper and tungsten. Functionally, microtubule-associated protein involved in membrane protein-cytoskeleton interactions. It is thought to anchor the inhibitory glycine receptor (GLYR) to subsynaptic microtubules. Acts as a major instructive molecule at inhibitory synapses, where it also clusters GABA type A receptors. Its function is as follows. Also has a catalytic activity and catalyzes two steps in the biosynthesis of the molybdenum cofactor. In the first step, molybdopterin is adenylated. Subsequently, molybdate is inserted into adenylated molybdopterin and AMP is released. The sequence is that of Gephyrin from Homo sapiens (Human).